Here is a 329-residue protein sequence, read N- to C-terminus: BTB/POZ domain-containing protein At1g55760 (329 aa).

In terms of domain architecture, BTB spans 164 to 231; sequence TDITINASDG…IYGNIQNEDF (68 aa).

Its pathway is protein modification; protein ubiquitination. In terms of biological role, may act as a substrate-specific adapter of an E3 ubiquitin-protein ligase complex (CUL3-RBX1-BTB) which mediates the ubiquitination and subsequent proteasomal degradation of target proteins. This is BTB/POZ domain-containing protein At1g55760 from Arabidopsis thaliana (Mouse-ear cress).